The following is a 335-amino-acid chain: Ubiquinol oxidase 1b, mitochondrial (335 aa).

The transit peptide at 1-47 (MSSRMAGATLLRHLGPRLFAAEPVYSGLAASARGVMPAAARIFPARM) directs the protein to the mitochondrion. A helical membrane pass occupies residues 160–180 (ALLLETVAGVPGMVGGMLLHL). Positions 164, 203, and 206 each coordinate Fe cation. The chain crosses the membrane as a helical span at residues 222 to 242 (ALVLAAQGVFFNAYFVGYLVS). Residues glutamate 254, glutamate 305, and histidine 308 each contribute to the Fe cation site.

The protein belongs to the alternative oxidase family. Fe cation is required as a cofactor.

It localises to the mitochondrion inner membrane. It catalyses the reaction 2 a ubiquinol + O2 = 2 a ubiquinone + 2 H2O. In terms of biological role, catalyzes the cyanide-resistant oxidation of ubiquinol and the reduction of molecular oxygen to water, but does not translocate protons and consequently is not linked to oxidative phosphorylation. May increase respiration when the cytochrome respiratory pathway is restricted, or in response to low temperatures. The polypeptide is Ubiquinol oxidase 1b, mitochondrial (Oryza sativa subsp. japonica (Rice)).